Reading from the N-terminus, the 197-residue chain is Probable GTP-binding protein EngB (197 aa).

Residues 22-195 enclose the EngB-type G domain; the sequence is KRIEIAFVGR…LKVLESVIDF (174 aa). GTP contacts are provided by residues 30 to 37, 57 to 61, 75 to 78, 142 to 145, and 174 to 176; these read GRSNVGKS, GKTRL, DLPG, TKVD, and FSS. Mg(2+) is bound by residues S37 and T59.

This sequence belongs to the TRAFAC class TrmE-Era-EngA-EngB-Septin-like GTPase superfamily. EngB GTPase family. The cofactor is Mg(2+).

Its function is as follows. Necessary for normal cell division and for the maintenance of normal septation. The polypeptide is Probable GTP-binding protein EngB (Clostridium kluyveri (strain ATCC 8527 / DSM 555 / NBRC 12016 / NCIMB 10680 / K1)).